Here is a 610-residue protein sequence, read N- to C-terminus: Elongation factor 4 (610 aa).

The region spanning 11–193 (KYIRNFSIVA…QIVTKIPAPA (183 aa)) is the tr-type G domain. Residues 23-28 (DHGKST) and 140-143 (NKID) contribute to the GTP site.

This sequence belongs to the TRAFAC class translation factor GTPase superfamily. Classic translation factor GTPase family. LepA subfamily.

It is found in the cell membrane. It catalyses the reaction GTP + H2O = GDP + phosphate + H(+). Functionally, required for accurate and efficient protein synthesis under certain stress conditions. May act as a fidelity factor of the translation reaction, by catalyzing a one-codon backward translocation of tRNAs on improperly translocated ribosomes. Back-translocation proceeds from a post-translocation (POST) complex to a pre-translocation (PRE) complex, thus giving elongation factor G a second chance to translocate the tRNAs correctly. Binds to ribosomes in a GTP-dependent manner. This is Elongation factor 4 from Levilactobacillus brevis (strain ATCC 367 / BCRC 12310 / CIP 105137 / JCM 1170 / LMG 11437 / NCIMB 947 / NCTC 947) (Lactobacillus brevis).